We begin with the raw amino-acid sequence, 49 residues long: Large ribosomal subunit protein bL33 (49 aa).

It belongs to the bacterial ribosomal protein bL33 family.

In Alkaliphilus metalliredigens (strain QYMF), this protein is Large ribosomal subunit protein bL33.